We begin with the raw amino-acid sequence, 466 residues long: Tryptophan synthase beta chain 2, chloroplastic (466 aa).

K161 is modified (N6-(pyridoxal phosphate)lysine).

This sequence belongs to the TrpB family. As to quaternary structure, tetramer of two alpha and two beta chains. It depends on pyridoxal 5'-phosphate as a cofactor.

It is found in the plastid. Its subcellular location is the chloroplast. It carries out the reaction (1S,2R)-1-C-(indol-3-yl)glycerol 3-phosphate + L-serine = D-glyceraldehyde 3-phosphate + L-tryptophan + H2O. It participates in amino-acid biosynthesis; L-tryptophan biosynthesis; L-tryptophan from chorismate: step 5/5. The beta subunit is responsible for the synthesis of L-tryptophan from indole and L-serine. The chain is Tryptophan synthase beta chain 2, chloroplastic (TSB) from Camptotheca acuminata (Happy tree).